The sequence spans 393 residues: Protein TsgA (393 aa).

At 1–10 (MTNSNRIKLT) the chain is on the cytoplasmic side. The chain crosses the membrane as a helical span at residues 11 to 31 (WISFLSYALTGALVIVTGMVM). Topologically, residues 32–50 (GNIADYFHLPVSSMSNTFT) are periplasmic. Residues 51–71 (FLNAGILISIFLNAWLMEIVP) form a helical membrane-spanning segment. The Cytoplasmic segment spans residues 72–77 (LKTQLR). The chain crosses the membrane as a helical span at residues 78–98 (FGFILMVLAVAGLMFSHSLAL). The Periplasmic portion of the chain corresponds to 99–100 (FS). Residues 101–121 (AAMFVLGLVSGITMSIGTFLI) form a helical membrane-spanning segment. Over 122–133 (TQLYEGRQRGSR) the chain is Cytoplasmic. The chain crosses the membrane as a helical span at residues 134-154 (LLFTDSFFSMAGMIFPMVAAF). Residues 155–161 (LLARSIE) lie on the Periplasmic side of the membrane. A helical transmembrane segment spans residues 162–182 (WYWVYACIGLVYLAIFILTFG). Residues 183–205 (CEFPALGKHAQHSQAPVVKEKWG) lie on the Cytoplasmic side of the membrane. A helical membrane pass occupies residues 206–226 (IGVLFLAVAALCYILGQLGFI). The Periplasmic portion of the chain corresponds to 227 to 244 (SWVPEYAKGLGMSLNDAG). Residues 245-265 (ALVSDFWMSYMFGMWAFSFIL) traverse the membrane as a helical segment. Residues 266–272 (RFFDLQR) lie on the Cytoplasmic side of the membrane. A helical membrane pass occupies residues 273-293 (ILTVLAGMAAVLMYLFITGTQ). The Periplasmic segment spans residues 294–297 (AHMP). Residues 298–318 (WFILTLGFFSSAIYTSIITLG) form a helical membrane-spanning segment. At 319-331 (SQQTKVASPKLVN) the chain is on the cytoplasmic side. A helical transmembrane segment spans residues 332–352 (FILTCGTIGTMLTFVVTGPIV). Over 353 to 360 (AHSGPQAA) the chain is Periplasmic. A helical transmembrane segment spans residues 361-381 (LLTANGLYAVVFVMCFALGFV). Over 382 to 393 (SRHRQHSSPAAH) the chain is Cytoplasmic.

The protein belongs to the major facilitator superfamily. TsgA family.

It is found in the cell inner membrane. This Salmonella paratyphi A (strain ATCC 9150 / SARB42) protein is Protein TsgA.